The primary structure comprises 1024 residues: Multidrug resistance protein MdtC (1024 aa).

12 helical membrane passes run 12-32, 333-353, 360-380, 387-407, 435-455, 469-489, 528-548, 853-873, 875-895, 897-917, 953-973, and 984-1004; these read VATT…FSLL, EVER…FIFL, LIPA…MYLC, LSLM…IVVL, VLSM…MAGL, VAIG…CAWL, WVMV…ISIP, LWLI…LYES, VHPL…LLAL, LFDA…IGIV, PIIM…LSSG, and ITIV…TPVI.

The protein belongs to the resistance-nodulation-cell division (RND) (TC 2.A.6) family. MdtC subfamily. Part of a tripartite efflux system composed of MdtA, MdtB and MdtC. MdtC forms a heteromultimer with MdtB.

Its subcellular location is the cell inner membrane. This is Multidrug resistance protein MdtC from Yersinia pseudotuberculosis serotype IB (strain PB1/+).